Consider the following 116-residue polypeptide: Iron-sulfur cluster insertion protein ErpA (116 aa).

The iron-sulfur cluster site is built by Cys-44, Cys-108, and Cys-110.

This sequence belongs to the HesB/IscA family. In terms of assembly, homodimer. Iron-sulfur cluster serves as cofactor.

In terms of biological role, required for insertion of 4Fe-4S clusters for at least IspG. The chain is Iron-sulfur cluster insertion protein ErpA from Shewanella putrefaciens (strain CN-32 / ATCC BAA-453).